Here is a 140-residue protein sequence, read N- to C-terminus: FAD synthase (140 aa).

Residues 9 to 10 (TF), 14 to 17 (HPGH), and D92 contribute to the ATP site.

It belongs to the archaeal FAD synthase family. Homodimer. It depends on a divalent metal cation as a cofactor.

It catalyses the reaction FMN + ATP + H(+) = FAD + diphosphate. Its pathway is cofactor biosynthesis; FAD biosynthesis; FAD from FMN: step 1/1. Catalyzes the transfer of the AMP portion of ATP to flavin mononucleotide (FMN) to produce flavin adenine dinucleotide (FAD) coenzyme. The sequence is that of FAD synthase from Natronomonas pharaonis (strain ATCC 35678 / DSM 2160 / CIP 103997 / JCM 8858 / NBRC 14720 / NCIMB 2260 / Gabara) (Halobacterium pharaonis).